A 338-amino-acid chain; its full sequence is Photosystem II assembly lipoprotein Ycf48 (338 aa).

An N-terminal signal peptide occupies residues 1–23; it reads MKKIITSFPNLLLSILLCFVLSS. A lipid anchor (N-palmitoyl cysteine) is attached at cysteine 24. Residue cysteine 24 is the site of S-diacylglycerol cysteine attachment.

This sequence belongs to the Ycf48 family. In terms of assembly, part of early PSII assembly complexes which includes D1 (psbA) and PsbI; not found in mature PSII. Binds to the lumenal side of PSII complexes. Interacts with YidC.

The protein resides in the cellular thylakoid membrane. Its function is as follows. A factor required for optimal assembly of photosystem II (PSII), acting in the early stages of PSII assembly. Also plays a role in replacement of photodamaged D1 (psbA). Assists YidC in synthesis of chlorophyll-binding proteins. The chain is Photosystem II assembly lipoprotein Ycf48 from Prochlorococcus marinus (strain MIT 9312).